The following is a 391-amino-acid chain: Ferrochelatase (391 aa).

2 residues coordinate Fe cation: H196 and E281.

The protein belongs to the ferrochelatase family.

The protein localises to the cytoplasm. The catalysed reaction is heme b + 2 H(+) = protoporphyrin IX + Fe(2+). It participates in porphyrin-containing compound metabolism; protoheme biosynthesis; protoheme from protoporphyrin-IX: step 1/1. In terms of biological role, catalyzes the ferrous insertion into protoporphyrin IX. In Prochlorococcus marinus (strain SARG / CCMP1375 / SS120), this protein is Ferrochelatase.